Reading from the N-terminus, the 261-residue chain is Small ribosomal subunit protein uS2 (261 aa).

The disordered stretch occupies residues 224 to 261 (GKQGQDDSEDVEKEMADKAAAENDDEESIEEVVEKSED). Over residues 245-254 (ENDDEESIEE) the composition is skewed to acidic residues.

Belongs to the universal ribosomal protein uS2 family.

This Lactobacillus gasseri (strain ATCC 33323 / DSM 20243 / BCRC 14619 / CIP 102991 / JCM 1131 / KCTC 3163 / NCIMB 11718 / NCTC 13722 / AM63) protein is Small ribosomal subunit protein uS2.